The chain runs to 129 residues: Processing of GAS1 and ALP protein 2 (129 aa).

An N-acetylserine modification is found at S2. A helical transmembrane segment spans residues 23–42 (HFIRLVIIVGGYLLLRNIAS). The stretch at 43 to 116 (RELAKKQLAA…EAKRRNQGLD (74 aa)) forms a coiled coil. Disordered regions lie at residues 53–92 (QVEKDKRDKEEKRSKDLIDKPDDAATAETTSFGWGKKTRR) and 106–129 (EEAKRRNQGLDPDSDADIEELLEE). Basic and acidic residues predominate over residues 54-75 (VEKDKRDKEEKRSKDLIDKPDD). Positions 117–129 (PDSDADIEELLEE) are enriched in acidic residues. The residue at position 119 (S119) is a Phosphoserine.

Belongs to the PGA2 family.

It is found in the endoplasmic reticulum membrane. The protein localises to the nucleus membrane. In terms of biological role, involved in the processing and trafficking of GAS1 and PHO8 glycosylated proteins. The polypeptide is Processing of GAS1 and ALP protein 2 (PGA2) (Saccharomyces cerevisiae (strain ATCC 204508 / S288c) (Baker's yeast)).